The chain runs to 154 residues: uncharacterized protein (154 aa).

The N-terminal 42 residues, 1-42, are a transit peptide targeting the mitochondrion; the sequence is MLRVIWKHSSRVTRSIELSNISTTNHTRSLRRLSWISPRRFY.

The protein resides in the mitochondrion. This is an uncharacterized protein from Saccharomyces cerevisiae (strain ATCC 204508 / S288c) (Baker's yeast).